The chain runs to 516 residues: Extracellular endo-inulinase inuA (516 aa).

The first 25 residues, 1-25, serve as a signal peptide directing secretion; sequence MLNPKVAYMVWMTCLGLMLPSQAQS. Substrate is bound by residues 40 to 43, glutamine 59, tryptophan 67, and 99 to 100; these read WMNE and FT. Residue glutamate 43 is part of the active site. Asparagine 109 carries an N-linked (GlcNAc...) asparagine glycan. Residue 175-176 participates in substrate binding; the sequence is RD. A glycan (N-linked (GlcNAc...) asparagine) is linked at asparagine 210. Glutamate 233 provides a ligand contact to substrate. Asparagine 372 and asparagine 419 each carry an N-linked (GlcNAc...) asparagine glycan.

This sequence belongs to the glycosyl hydrolase 32 family.

It localises to the secreted. It carries out the reaction Endohydrolysis of (2-&gt;1)-beta-D-fructosidic linkages in inulin.. With respect to regulation, activity is stimulated by Mn(2+), Fe(2+) Ca(2+) metal ions and DTT; and inhibited by glucose, Mg(2+), Zn(2+), Cu(2+), Hg(2+), Al(3+), and Fe(3+). In terms of biological role, endo-inulinase involved in utilization of the plant storage polymer inulin, consisting of fructooligosaccharides with a degree of polymerization (DP) value from 2 to 60. The chain is Extracellular endo-inulinase inuA (inuA) from Aspergillus niger.